Here is a 107-residue protein sequence, read N- to C-terminus: Anti-adapter protein IraM (107 aa).

Belongs to the IraM/RssC family.

It localises to the cytoplasm. Functionally, inhibits RpoS proteolysis by regulating RssB activity, thereby increasing the stability of the sigma stress factor RpoS during magnesium starvation. The chain is Anti-adapter protein IraM from Escherichia coli O17:K52:H18 (strain UMN026 / ExPEC).